The chain runs to 122 residues: Large ribosomal subunit protein uL14 (122 aa).

The protein belongs to the universal ribosomal protein uL14 family. Part of the 50S ribosomal subunit. Forms a cluster with proteins L3 and L19. In the 70S ribosome, L14 and L19 interact and together make contacts with the 16S rRNA in bridges B5 and B8.

In terms of biological role, binds to 23S rRNA. Forms part of two intersubunit bridges in the 70S ribosome. This Polynucleobacter asymbioticus (strain DSM 18221 / CIP 109841 / QLW-P1DMWA-1) (Polynucleobacter necessarius subsp. asymbioticus) protein is Large ribosomal subunit protein uL14.